Here is a 64-residue protein sequence, read N- to C-terminus: Conotoxin Tx3.5-a (64 aa).

A signal peptide spans Met-1 to Ala-19. Residues Leu-20–Arg-47 constitute a propeptide that is removed on maturation. 3 cysteine pairs are disulfide-bonded: Cys-49–Cys-58, Cys-50–Cys-62, and Cys-54–Cys-63. Cys-63 carries the post-translational modification Cysteine amide.

Belongs to the conotoxin M superfamily. Post-translationally, contains 3 disulfide bonds. In terms of processing, two peptides are produced from this precursor. Conotoxin Tx3.5-b is amidated at Cys-63, conotoxin Tx3.5-a has an unmodified C-terminus. Expressed by the venom duct. Is present in all duct parts with a highest content in part 2 (proximal of the venom bulb) and then decreases in concentration toward the end of the duct.

Its subcellular location is the secreted. The protein is Conotoxin Tx3.5-a of Conus textile (Cloth-of-gold cone).